The primary structure comprises 255 residues: 4-hydroxy-tetrahydrodipicolinate reductase (255 aa).

Residues 9–14, Asp35, 89–91, and 115–118 contribute to the NAD(+) site; these read GFKGKM, GTT, and APNF. The Proton donor/acceptor role is filled by His145. His146 provides a ligand contact to (S)-2,3,4,5-tetrahydrodipicolinate. The active-site Proton donor is Lys149. (S)-2,3,4,5-tetrahydrodipicolinate is bound at residue 155 to 156; sequence GT.

Belongs to the DapB family.

It is found in the cytoplasm. The enzyme catalyses (S)-2,3,4,5-tetrahydrodipicolinate + NAD(+) + H2O = (2S,4S)-4-hydroxy-2,3,4,5-tetrahydrodipicolinate + NADH + H(+). It catalyses the reaction (S)-2,3,4,5-tetrahydrodipicolinate + NADP(+) + H2O = (2S,4S)-4-hydroxy-2,3,4,5-tetrahydrodipicolinate + NADPH + H(+). It participates in amino-acid biosynthesis; L-lysine biosynthesis via DAP pathway; (S)-tetrahydrodipicolinate from L-aspartate: step 4/4. Catalyzes the conversion of 4-hydroxy-tetrahydrodipicolinate (HTPA) to tetrahydrodipicolinate. This Streptococcus pneumoniae (strain P1031) protein is 4-hydroxy-tetrahydrodipicolinate reductase.